A 590-amino-acid polypeptide reads, in one-letter code: Guanylate-binding protein 5 (590 aa).

Residues 1-306 (MAPEIHMPEP…LTYVDAINSG (306 aa)) form an NLRP3-binding region. The interval 1-310 (MAPEIHMPEP…DAINSGALPS (310 aa)) is GTPase domain (Globular). The 243-residue stretch at 35–277 (TQPVVVVAIV…FCSHIFTQSK (243 aa)) folds into the GB1/RHD3-type G domain. GTP-binding positions include 45-52 (GLYRTGKS), 67-69 (VGS), 182-183 (RD), and leucine 246. A required for tetramerization, but not for dimerization region spans residues 529-590 (QIALEKARVA…RRHHHDCVIS (62 aa)). At cysteine 587 the chain carries Cysteine methyl ester. Cysteine 587 is lipidated: S-geranylgeranyl cysteine. Residues 588 to 590 (VIS) constitute a propeptide, removed in mature form.

This sequence belongs to the TRAFAC class dynamin-like GTPase superfamily. GB1/RHD3 GTPase family. GB1 subfamily. Homodimer; homodimerizes upon GTP-binding, forming a close face-to-face dimer. Heterodimer with other family members, including GBP1, GBP2, GBP3 and GBP4. May also form tetramers (dimer of dimers) in the presence of GTP. Interacts with NLRP3, possibly in its tetrameric form, and promotes PYCARD/ASC polymerization. In terms of processing, isoprenylation is required for proper subcellular location. In terms of tissue distribution, low expression, if any, in many tissues in the absence of stimulation.

Its subcellular location is the cytoplasmic vesicle membrane. It is found in the golgi apparatus membrane. It localises to the cytoplasm. The enzyme catalyses GTP + H2O = GDP + phosphate + H(+). In terms of biological role, interferon (IFN)-inducible GTPase that plays important roles in innate immunity against a diverse range of bacterial, viral and protozoan pathogens. Hydrolyzes GTP, but in contrast to other family members, does not produce GMP. Following infection, recruited to the pathogen-containing vacuoles or vacuole-escaped bacteria and acts as a positive regulator of inflammasome assembly by promoting the release of inflammasome ligands from bacteria. Acts by promoting lysis of pathogen-containing vacuoles, releasing pathogens into the cytosol. Following pathogen release in the cytosol, promotes recruitment of proteins that mediate bacterial cytolysis, such as Gm12250/Irgb10: this liberates ligands that are detected by inflammasomes, such as lipopolysaccharide (LPS) that activates the non-canonical CASP4/CASP11 inflammasome or double-stranded DNA (dsDNA) that activates the AIM2 inflammasome. As an activator of NLRP3 inflammasome assembly: promotes selective NLRP3 inflammasome assembly in response to microbial and soluble, but not crystalline, agents. Independently of its GTPase activity, acts as an inhibitor of various viruses infectivity by inhibiting FURIN-mediated maturation of viral envelope proteins. This chain is Guanylate-binding protein 5, found in Mus musculus (Mouse).